The primary structure comprises 41 residues: Trypsin inhibitor (41 aa).

3 disulfides stabilise this stretch: cysteine 15–cysteine 26, cysteine 17–cysteine 24, and cysteine 29–cysteine 37.

Functionally, has two active sites that simultaneously bind and inhibit trypsin. In Trichosanthes kirilowii (Chinese snake gourd), this protein is Trypsin inhibitor.